The following is a 234-amino-acid chain: Large ribosomal subunit protein uL1 (234 aa).

The protein belongs to the universal ribosomal protein uL1 family. Part of the 50S ribosomal subunit.

Its function is as follows. Binds directly to 23S rRNA. The L1 stalk is quite mobile in the ribosome, and is involved in E site tRNA release. Protein L1 is also a translational repressor protein, it controls the translation of the L11 operon by binding to its mRNA. The protein is Large ribosomal subunit protein uL1 of Klebsiella pneumoniae (strain 342).